The chain runs to 373 residues: Ca(2+)/H(+) antiporter (373 aa).

Helical transmembrane passes span 6–26, 29–49, 61–81, 94–114, 134–154, 162–182, 220–240, 249–269, 291–311, 318–338, and 349–369; these read TIFF…WLHW, VSIF…MGEA, LGGL…AFIA, ITGS…LLGG, MNLA…SNGI, LSVA…LFSM, FWLG…ELLV, SLGL…GNAA, VGST…AGWI, LDFN…ANSI, and GSLL…HPVV.

This sequence belongs to the Ca(2+):cation antiporter (CaCA) (TC 2.A.19) family. Cation/proton exchanger (CAX) subfamily.

It localises to the cell inner membrane. Its function is as follows. Ca(+)/H(+) antiporter that extrudes calcium in exchange for external protons. Plays an important role in salt tolerance. Does not transport sodium or lithium. The polypeptide is Ca(2+)/H(+) antiporter (Aphanothece halophytica).